The following is a 1341-amino-acid chain: DNA-directed RNA polymerase subunit beta (1341 aa).

The protein belongs to the RNA polymerase beta chain family. In terms of assembly, the RNAP catalytic core consists of 2 alpha, 1 beta, 1 beta' and 1 omega subunit. When a sigma factor is associated with the core the holoenzyme is formed, which can initiate transcription.

It carries out the reaction RNA(n) + a ribonucleoside 5'-triphosphate = RNA(n+1) + diphosphate. Its function is as follows. DNA-dependent RNA polymerase catalyzes the transcription of DNA into RNA using the four ribonucleoside triphosphates as substrates. In Vibrio cholerae serotype O1 (strain ATCC 39315 / El Tor Inaba N16961), this protein is DNA-directed RNA polymerase subunit beta.